Here is a 195-residue protein sequence, read N- to C-terminus: MKSLKGTKTAENLMKSFAGECQARTRYTYFSSTARKEGYVQISNIFLETAENEKEHAKRFYKFLKDDLQGEAVEINAAYPVELPTDTLTNLKFAAEGEHDELSNLYPSFADVADEEGFPEVAAAFRMIAKAETAHYNRFMKLAKNIEEGKVFKKDEVVLWKCGNCGFIWEGAEAPLKCPACLHPQAYFEVFKETY.

A Ferritin-like diiron domain is found at 1-150 (MKSLKGTKTA…KLAKNIEEGK (150 aa)). Fe(3+) contacts are provided by glutamate 20, glutamate 53, glutamate 98, glutamate 101, glutamate 132, histidine 135, cysteine 162, cysteine 165, cysteine 178, and cysteine 181. The Rubredoxin-like domain occupies 157 to 195 (VVLWKCGNCGFIWEGAEAPLKCPACLHPQAYFEVFKETY).

In terms of assembly, homodimer. Possesses two rubredoxin-like centers and two non-sulfur oxo-bridged di-iron centers per dimer. It depends on Fe(3+) as a cofactor.

The protein resides in the cytoplasm. Its function is as follows. May provide oxidative stress protection via catalytic reduction of intracellular hydrogen peroxide. This chain is Rubrerythrin (rbr), found in Clostridium perfringens (strain 13 / Type A).